Reading from the N-terminus, the 325-residue chain is Porphobilinogen deaminase (325 aa).

S-(dipyrrolylmethanemethyl)cysteine is present on Cys-253.

It belongs to the HMBS family. It depends on dipyrromethane as a cofactor.

It carries out the reaction 4 porphobilinogen + H2O = hydroxymethylbilane + 4 NH4(+). It participates in porphyrin-containing compound metabolism; protoporphyrin-IX biosynthesis; coproporphyrinogen-III from 5-aminolevulinate: step 2/4. Functionally, tetrapolymerization of the monopyrrole PBG into the hydroxymethylbilane pre-uroporphyrinogen in several discrete steps. The protein is Porphobilinogen deaminase (hemC) of Dictyostelium discoideum (Social amoeba).